We begin with the raw amino-acid sequence, 460 residues long: Adenosylhomocysteinase (460 aa).

3 residues coordinate substrate: Thr-83, Asp-158, and Glu-184. 185 to 187 (TTT) is an NAD(+) binding site. Residues Lys-214 and Asp-218 each coordinate substrate. NAD(+)-binding positions include Asn-219, 248–253 (GYGDVG), Glu-271, 327–329 (IGH), and Asn-373.

It belongs to the adenosylhomocysteinase family. Requires NAD(+) as cofactor.

It is found in the cytoplasm. The catalysed reaction is S-adenosyl-L-homocysteine + H2O = L-homocysteine + adenosine. Its pathway is amino-acid biosynthesis; L-homocysteine biosynthesis; L-homocysteine from S-adenosyl-L-homocysteine: step 1/1. In terms of biological role, may play a key role in the regulation of the intracellular concentration of adenosylhomocysteine. This Bdellovibrio bacteriovorus (strain ATCC 15356 / DSM 50701 / NCIMB 9529 / HD100) protein is Adenosylhomocysteinase.